A 305-amino-acid polypeptide reads, in one-letter code: Acetyl-coenzyme A carboxylase carboxyl transferase subunit beta (305 aa).

Positions 27–296 constitute a CoA carboxyltransferase N-terminal domain; sequence LWVKCSACRE…PAAKADLAAR (270 aa). Zn(2+)-binding residues include Cys31, Cys34, Cys50, and Cys53. Residues 31 to 53 form a C4-type zinc finger; it reads CSACRELIYKKQLNDNLKVCPKC.

The protein belongs to the AccD/PCCB family. Acetyl-CoA carboxylase is a heterohexamer composed of biotin carboxyl carrier protein (AccB), biotin carboxylase (AccC) and two subunits each of ACCase subunit alpha (AccA) and ACCase subunit beta (AccD). Zn(2+) is required as a cofactor.

Its subcellular location is the cytoplasm. It catalyses the reaction N(6)-carboxybiotinyl-L-lysyl-[protein] + acetyl-CoA = N(6)-biotinyl-L-lysyl-[protein] + malonyl-CoA. It participates in lipid metabolism; malonyl-CoA biosynthesis; malonyl-CoA from acetyl-CoA: step 1/1. Its function is as follows. Component of the acetyl coenzyme A carboxylase (ACC) complex. Biotin carboxylase (BC) catalyzes the carboxylation of biotin on its carrier protein (BCCP) and then the CO(2) group is transferred by the transcarboxylase to acetyl-CoA to form malonyl-CoA. This Chloroflexus aggregans (strain MD-66 / DSM 9485) protein is Acetyl-coenzyme A carboxylase carboxyl transferase subunit beta.